A 229-amino-acid chain; its full sequence is MMNFSDPCLLGPSACNEDFFEELAREILPTPEAKALAARLLRRLGWHPSEGQCSWCPEAYEYLYDLQFRYTGPVPLVRKHPGSALIVRWMLDGLGHFLFCRPRVQGNPLTYHLSCMGSAIRTLELFREQAHSHLWEQGNLVDCYWSCSSDYGYEGKWGQQAVVRGALSGPWPRPDPPSLQLQCLCAIWRTCLLRGQSQAQKYTNWICARHLQLRPDTSTRDSDLLLQRC.

As to quaternary structure, interacts with host RELA (via RHD domain), ELOB, ELOC and CUL5; these interactions induce the proteasomal degradation of host RELA.

It localises to the host cytoplasm. Functionally, inhibits host NF-kappa-B activation stimulated by IL-1 and multiple PRR viral detection pathways. Targets host NF-kappa-B component RELA/p65 for ubiquitin-dependent proteasomal degradation. The polypeptide is Protein MC132 (MC132) (Homo sapiens (Human)).